A 329-amino-acid polypeptide reads, in one-letter code: Quinone oxidoreductase (329 aa).

Ala-2 is subject to N-acetylalanine. Position 23 is an N6-acetyllysine (Lys-23). NADP(+)-binding positions include Tyr-53, 158–161 (SGGV), Gly-181, His-200, Asn-229, 246–249 (VGSR), and 269–271 (VTL). Ser-248 carries the phosphoserine modification. Lys-296 is subject to N6-succinyllysine.

Belongs to the zinc-containing alcohol dehydrogenase family. Quinone oxidoreductase subfamily. In terms of assembly, homotetramer. In terms of tissue distribution, only very low amounts in the lens.

The protein localises to the cytoplasm. The catalysed reaction is 2 a quinone + NADPH + H(+) = 2 a 1,4-benzosemiquinone + NADP(+). Functionally, does not have alcohol dehydrogenase activity. Binds NADP and acts through a one-electron transfer process. Orthoquinones, such as 1,2-naphthoquinone or 9,10-phenanthrenequinone, are the best substrates (in vitro). May act in the detoxification of xenobiotics. Interacts with (AU)-rich elements (ARE) in the 3'-UTR of target mRNA species. Enhances the stability of mRNA coding for BCL2. NADPH binding interferes with mRNA binding. This Homo sapiens (Human) protein is Quinone oxidoreductase (CRYZ).